The sequence spans 429 residues: Keratin, type I cytoskeletal 47 kDa (429 aa).

Residues 1 to 16 show a composition bias toward low complexity; the sequence is MTSYRSSSASYYSGSS. The segment at 1–20 is disordered; the sequence is MTSYRSSSASYYSGSSSKGG. The segment at 1-69 is head; sequence MTSYRSSSAS…EAASSSFGGN (69 aa). The tract at residues 70–105 is coil 1A; the sequence is EKHAMQNLNDRLASYLEKVRALEATNSDLEGKIRNW. Positions 70-385 constitute an IF rod domain; that stretch reads EKHAMQNLND…RLLEGELGQV (316 aa). A linker 1 region spans residues 106–127; that stretch reads YDKQSDAGIGAGSKDYSKYFEI. The interval 128-219 is coil 1B; the sequence is IAELRNKIRA…KNHEEEMSHA (92 aa). The segment at 220-242 is linker 12; the sequence is KSQSAGKVSVEMDAALGVDLTSI. Positions 243 to 381 are coil 2; the sequence is LNNMRADYEI…QTYRRLLEGE (139 aa). The tail stretch occupies residues 382–429; that stretch reads LGQVTTVANTSSVESKTESSSTSTTRTRMVKTIVEEVVDGKVVSSRVE. Residues 389 to 408 form a disordered region; that stretch reads ANTSSVESKTESSSTSTTRT. Over residues 391–408 the composition is skewed to low complexity; the sequence is TSSVESKTESSSTSTTRT.

The protein belongs to the intermediate filament family. As to quaternary structure, heterotetramer of two type I and two type II keratins.

This is Keratin, type I cytoskeletal 47 kDa (xk81a1) from Xenopus laevis (African clawed frog).